The chain runs to 463 residues: MSTGTVVQVIGAVVDVEFPQDSVPRVYDALKITGEGACNGLVLEVQQQLGGGVVRTIAMGSSDGLRRGLEVANSGSPITVPVGVATLGRIMNVLGEPIDEAGPIGEEERYVIHRAAPSYEDQSNSTELLETGIKVIDLVCPFAKGGKVGLFGGAGVGKTVNMMELINNIAKAHSGLSVFAGVGERTREGNDFYYEMEDSGVLDKVAMVYGQMNEPPGNRLRVALTGLSIAEKFRDEGRDVLLFVDNIYRYTLAGTEVSALLGRMPSAVGYQPTLAEEMGVLQERITSTKSGSITSVQAVYVPADDLTDPSPATTFAHLDATVVLSRQIASLGIYPAVDPLDSTSRQLDPQVVGQEHYDVANGVQTVLQRYKELKDIIAILGMDELSDDDKTMVFRARKIERFLSQPFFVAEVFTGSPGKYVSLKDTIRGFKGILDGEFDHIPEQAFYMVGSIDEAVEKANKKK.

Glycine 152 to threonine 159 serves as a coordination point for ATP.

The protein belongs to the ATPase alpha/beta chains family. F-type ATPases have 2 components, CF(1) - the catalytic core - and CF(0) - the membrane proton channel. CF(1) has five subunits: alpha(3), beta(3), gamma(1), delta(1), epsilon(1). CF(0) has three main subunits: a(1), b(2) and c(9-12). The alpha and beta chains form an alternating ring which encloses part of the gamma chain. CF(1) is attached to CF(0) by a central stalk formed by the gamma and epsilon chains, while a peripheral stalk is formed by the delta and b chains.

Its subcellular location is the cell inner membrane. The enzyme catalyses ATP + H2O + 4 H(+)(in) = ADP + phosphate + 5 H(+)(out). In terms of biological role, produces ATP from ADP in the presence of a proton gradient across the membrane. The catalytic sites are hosted primarily by the beta subunits. In Shewanella frigidimarina (strain NCIMB 400), this protein is ATP synthase subunit beta 1.